A 747-amino-acid chain; its full sequence is Tripartite terminase subunit 3 (747 aa).

The Nuclear localization signal signature appears at 194-198; the sequence is KRAKV. The Walker A motif signature appears at 267-274; it reads VPRRHGKT. Positions 361 to 366 match the Walker B motif motif; that stretch reads LLFVDE. Glutamate 366 (for ATPase activity) is an active-site residue. Active-site for nuclease activity residues include aspartate 521, glutamate 593, and aspartate 722.

The protein belongs to the herpesviridae TRM3 protein family. Interacts with the terminase subunits TRM1 and TRM2. Interacts with portal protein.

The protein localises to the host nucleus. In terms of biological role, component of the molecular motor that translocates viral genomic DNA in empty capsid during DNA packaging. Forms a tripartite terminase complex together with TRM1 and TRM2 in the host cytoplasm. Once the complex reaches the host nucleus, it interacts with the capsid portal vertex. This portal forms a ring in which genomic DNA is translocated into the capsid. TRM3 carries an RNase H-like nuclease activity that plays an important role for the cleavage of concatemeric viral DNA into unit length genomes. This is Tripartite terminase subunit 3 from Homo sapiens (Human).